A 475-amino-acid chain; its full sequence is Zinc finger protein 383 (475 aa).

Residues 6 to 77 enclose the KRAB domain; sequence VMFSDVSIDF…GRELTRGLCS (72 aa). 11 C2H2-type zinc fingers span residues 170-192, 198-220, 226-248, 254-276, 282-304, 310-332, 338-360, 366-388, 394-416, 422-444, and 450-472; these read FECKKCGKAFSQNSQFIQHQRIH, YECKECGKFFSCGSHVTRHLKIH, FECKECGKAFSCSSYLSQHQRIH, YECKECGKAFSYCSNLIDHQRIH, YACKVCGKAFTKSSQLFQHVRIH, YECKECGKAFTQSSKLVQHQRIH, YECKECGKAFSSGSALTNHQRIH, YDCKECGKAFTQSSQLRQHQRIH, FECLECGKAFTQNSQLFQHQRIH, YECNECGKAFNKCSNLTRHLRIH, and YNCKECGKAFSSGSDLIRHQGIH.

This sequence belongs to the krueppel C2H2-type zinc-finger protein family.

It localises to the nucleus. It is found in the cytoplasm. In terms of biological role, may function as a transcriptional repressor, suppressing transcriptional activities mediated by MAPK signaling pathways. The polypeptide is Zinc finger protein 383 (ZNF383) (Macaca fascicularis (Crab-eating macaque)).